Consider the following 1034-residue polypeptide: Probable isoleucine--tRNA ligase, mitochondrial (1034 aa).

A mitochondrion-targeting transit peptide spans 1–32 (MISLNNSFFNKRVIVNSFNNYKRSFGTKSQNE). The 'HIGH' region signature appears at 94–104 (PYANGDLHMGH). The short motif at 655-659 (KMSKS) is the 'KMSKS' region element. Residue lysine 658 coordinates ATP.

It belongs to the class-I aminoacyl-tRNA synthetase family.

It localises to the mitochondrion matrix. It catalyses the reaction tRNA(Ile) + L-isoleucine + ATP = L-isoleucyl-tRNA(Ile) + AMP + diphosphate. This chain is Probable isoleucine--tRNA ligase, mitochondrial (mileS), found in Dictyostelium discoideum (Social amoeba).